The primary structure comprises 104 residues: Integration host factor subunit beta (104 aa).

The protein belongs to the bacterial histone-like protein family. Heterodimer of an alpha and a beta chain.

Functionally, this protein is one of the two subunits of integration host factor, a specific DNA-binding protein that functions in genetic recombination as well as in transcriptional and translational control. This chain is Integration host factor subunit beta, found in Xylella fastidiosa (strain M23).